Reading from the N-terminus, the 243-residue chain is 2,3-bisphosphoglycerate-dependent phosphoglycerate mutase (243 aa).

Substrate-binding positions include 8 to 15, 21 to 22, R60, 87 to 90, K98, 114 to 115, and 183 to 184; these read RHGQSEWN, TG, ERHY, RR, and GN. H9 serves as the catalytic Tele-phosphohistidine intermediate. E87 functions as the Proton donor/acceptor in the catalytic mechanism.

It belongs to the phosphoglycerate mutase family. BPG-dependent PGAM subfamily.

It carries out the reaction (2R)-2-phosphoglycerate = (2R)-3-phosphoglycerate. Its pathway is carbohydrate degradation; glycolysis; pyruvate from D-glyceraldehyde 3-phosphate: step 3/5. In terms of biological role, catalyzes the interconversion of 2-phosphoglycerate and 3-phosphoglycerate. This is 2,3-bisphosphoglycerate-dependent phosphoglycerate mutase from Clostridium acetobutylicum (strain ATCC 824 / DSM 792 / JCM 1419 / IAM 19013 / LMG 5710 / NBRC 13948 / NRRL B-527 / VKM B-1787 / 2291 / W).